The chain runs to 334 residues: Malate dehydrogenase, cytoplasmic (334 aa).

Position 11-17 (11-17 (GAAGQIA)) interacts with NAD(+). Positions 92 and 98 each coordinate substrate. Residues Asn105, Gln112, and 129-131 (VGN) contribute to the NAD(+) site. The substrate site is built by Asn131 and Arg162. His187 acts as the Proton acceptor in catalysis.

Belongs to the LDH/MDH superfamily. MDH type 2 family. Homodimer.

The protein localises to the cytoplasm. The protein resides in the cytosol. The enzyme catalyses (S)-malate + NAD(+) = oxaloacetate + NADH + H(+). The catalysed reaction is (S)-2-hydroxyglutarate + NAD(+) = 2-oxoglutarate + NADH + H(+). Functionally, catalyzes the reduction of aromatic alpha-keto acids in the presence of NADH. Plays essential roles in the malate-aspartate shuttle and the tricarboxylic acid cycle, important in mitochondrial NADH supply for oxidative phosphorylation. Catalyzes the reduction of 2-oxoglutarate to 2-hydroxyglutarate, leading to elevated reactive oxygen species (ROS). In Xenopus laevis (African clawed frog), this protein is Malate dehydrogenase, cytoplasmic (mdh1).